Reading from the N-terminus, the 588-residue chain is Phenol 2-monooxygenase fsqG (588 aa).

Residues 9–38 (DVLI…LIDW), 17–18 (PA), 37–39 (DWK), 45–50 (TGRADG), tyrosine 232, 289–299 (ARHNRIFLAGD), aspartate 299, and 309–313 (GQGMN) contribute to the FAD site. Substrate contacts are provided by aspartate 49 and tyrosine 232.

It belongs to the PheA/TfdB FAD monooxygenase family. In terms of assembly, homodimer. FAD is required as a cofactor.

It participates in secondary metabolite biosynthesis. Functionally, phenol 2-monooxygenase; part of the gene cluster that mediates the biosynthesis of the isoquinoline alkaloids fumisoquin A, fumisoquin B and fumisoquin C; as well as small amounts of fumipyrrole as a shunt metabolite. The products of the cluster lead to a brown coloration and are important for growth and conidiation. The nonribosomal peptide synthetase-like protein fsqF, which lacks a canonical condensation domain, is required for addition of a serine-derived dehydroalanine moiety to activated tyrosine but is not essential for the subsequent steps leading to isoquinoline formation. A different enzyme, most likely the ATP-grasp enzyme fsqD, is responsible for activation of tyrosine. Three additional enzymes encoded by the fsq cluster, the N-methyltransferase fsqC, the phenol 2-monooxygenase fsqG and the FAD-dependent oxidase fsqB, catalyze the formation of the isoquinoline ring system in the fumisoquins. FsqB converts the fspF thiolation domain-bound (2S,4S,5S)-2-amino-6-(3,4-dihydroxyphenyl)-4-hydroxy-5-(methylamino)hexanoyl into isoquinoline. The cyclization most likely proceeds via a two-step mechanism, beginning with FAD-dependent oxidation of the methyl group to an iminium species followed by electrophilic attack on the deprotonated phenol. The sequence is that of Phenol 2-monooxygenase fsqG from Aspergillus fumigatus (strain ATCC MYA-4609 / CBS 101355 / FGSC A1100 / Af293) (Neosartorya fumigata).